The sequence spans 753 residues: Protein-lysine N-methyltransferase SMYD4 (753 aa).

112–114 (RSA) is an S-adenosyl-L-methionine binding site. The SET domain occupies 186 to 528 (DGVSVYFSSD…AGQEILHCYG (343 aa)). Zn(2+) contacts are provided by C246, C249, C259, C262, C268, C272, H281, and C285. The segment at 246–285 (CHHCLSQSLSFVPCPKCSYARYCGESCQKDAWDQWHQWEC) adopts an MYND-type zinc-finger fold. S-adenosyl-L-methionine-binding positions include 467 to 468 (NH) and Y527.

It belongs to the class V-like SAM-binding methyltransferase superfamily.

It is found in the nucleus. It localises to the cytoplasm. It catalyses the reaction L-lysyl-[protein] + S-adenosyl-L-methionine = N(6)-methyl-L-lysyl-[protein] + S-adenosyl-L-homocysteine + H(+). Its function is as follows. Protein-lysine N-methyltransferase. Monomethylates PRMT5, modulating its transcriptional activity. May also act as a histone methyltransferase. Plays a critical role in cardiac development. Acts as a key epigenetic regulator of gene expression during cardiac development via its dual activities as a methyltransferase and negative regulator of HDAC1. In Danio rerio (Zebrafish), this protein is Protein-lysine N-methyltransferase SMYD4 (smyd4).